Here is a 522-residue protein sequence, read N- to C-terminus: MTPTRCDRTPAWGALQAAYQTQGRAFDLRRAFALDAGRFEAFSQGAPHVFADLSKNLIDAGTEQQLLELARQTGLEQHRDAMFAGEKINTTEQRAVMHWLLRTPPADPAMPAQSVHRHMAETLHEVHTTLEAMLAFAEAVRADETITDIVNIGIGGSDLGPQMAVLALDAFVLPGKRFHFVSNVDGHELAAVLRRLKPQSTLFLIASKTFTTIETMTNARSAKAWFEAQGGTDIARHFAALTTNVAAANNFGISTTFGFWDWVGGRYSVWSAIGLPLAIAIGAVGFRDFLAGAHAMDRHFATVPLAQNLPVRLGLLDVWYRNFHGFTSRSIAPYHSALKRYPAYLQQLEMESNGKRVDAHGEALPYGTAPVLWGEPGTNGQHAYFQMLHQGTDVVPVEFVAVKQAAHDLPGHHDLLLANVLAQAQALMVGQADAGGHKNFPGNRPSTFLLLDALTPASLGALIALQEHRVFVSGSVWGINSFDQWGVELGKVLAKDVAVRLSSGNVTGLDGSTAGLLARLRA.

Residue glutamate 351 is the Proton donor of the active site. Residues histidine 382 and lysine 491 contribute to the active site.

This sequence belongs to the GPI family.

The protein resides in the cytoplasm. It carries out the reaction alpha-D-glucose 6-phosphate = beta-D-fructose 6-phosphate. The protein operates within carbohydrate biosynthesis; gluconeogenesis. It participates in carbohydrate degradation; glycolysis; D-glyceraldehyde 3-phosphate and glycerone phosphate from D-glucose: step 2/4. Its function is as follows. Catalyzes the reversible isomerization of glucose-6-phosphate to fructose-6-phosphate. The chain is Glucose-6-phosphate isomerase from Albidiferax ferrireducens (strain ATCC BAA-621 / DSM 15236 / T118) (Rhodoferax ferrireducens).